The primary structure comprises 369 residues: Phospho-N-acetylmuramoyl-pentapeptide-transferase (369 aa).

A run of 10 helical transmembrane segments spans residues 3–23 (ALLG…PLFI), 53–73 (GGIV…LLTW), 81–101 (VTPS…VGFL), 118–138 (WQKI…AITL), 162–182 (FMAL…CLIV), 198–218 (LAAG…FWQF), 240–260 (PLDL…FLWW), 267–287 (IFMG…LAIL), 290–310 (TELL…SVVL), and 347–367 (FWII…LEWI).

Belongs to the glycosyltransferase 4 family. MraY subfamily. Mg(2+) is required as a cofactor.

It localises to the cell membrane. The enzyme catalyses UDP-N-acetyl-alpha-D-muramoyl-L-alanyl-gamma-D-glutamyl-meso-2,6-diaminopimeloyl-D-alanyl-D-alanine + di-trans,octa-cis-undecaprenyl phosphate = di-trans,octa-cis-undecaprenyl diphospho-N-acetyl-alpha-D-muramoyl-L-alanyl-D-glutamyl-meso-2,6-diaminopimeloyl-D-alanyl-D-alanine + UMP. The protein operates within cell wall biogenesis; peptidoglycan biosynthesis. Its function is as follows. Catalyzes the initial step of the lipid cycle reactions in the biosynthesis of the cell wall peptidoglycan: transfers peptidoglycan precursor phospho-MurNAc-pentapeptide from UDP-MurNAc-pentapeptide onto the lipid carrier undecaprenyl phosphate, yielding undecaprenyl-pyrophosphoryl-MurNAc-pentapeptide, known as lipid I. This is Phospho-N-acetylmuramoyl-pentapeptide-transferase from Clavibacter sepedonicus (Clavibacter michiganensis subsp. sepedonicus).